The sequence spans 454 residues: Guanine deaminase (454 aa).

2 residues coordinate Zn(2+): His-82 and His-84. Residues 84 to 87 (HASQ), 213 to 214 (RF), 240 to 243 (HISE), and Asp-330 each bind substrate. Zn(2+) contacts are provided by His-240 and Asp-330. A Phosphoserine modification is found at Ser-453.

It belongs to the metallo-dependent hydrolases superfamily. ATZ/TRZ family. In terms of assembly, homodimer. Requires Zn(2+) as cofactor.

The enzyme catalyses guanine + H2O + H(+) = xanthine + NH4(+). It functions in the pathway purine metabolism; guanine degradation; xanthine from guanine: step 1/1. Its function is as follows. Catalyzes the hydrolytic deamination of guanine, producing xanthine and ammonia. The protein is Guanine deaminase (GDA) of Pongo abelii (Sumatran orangutan).